Reading from the N-terminus, the 314-residue chain is L-lactate dehydrogenase 2 (314 aa).

Residues V16, D37, K42, Y68, and 82–83 each bind NAD(+); that span reads GV. Positions 85 and 91 each coordinate substrate. NAD(+)-binding positions include S104, 121–123, and T146; that span reads ASN. Residue 123–126 coordinates substrate; it reads NPVD. 151–154 lines the substrate pocket; that stretch reads DTTR. Residues R156 and H171 each contribute to the beta-D-fructose 1,6-bisphosphate site. H178 acts as the Proton acceptor in catalysis. Y223 is modified (phosphotyrosine). T232 is a substrate binding site.

Belongs to the LDH/MDH superfamily. LDH family. As to quaternary structure, homotetramer.

The protein resides in the cytoplasm. The catalysed reaction is (S)-lactate + NAD(+) = pyruvate + NADH + H(+). It functions in the pathway fermentation; pyruvate fermentation to lactate; (S)-lactate from pyruvate: step 1/1. Allosterically activated by fructose 1,6-bisphosphate (FBP). Catalyzes the conversion of lactate to pyruvate. The chain is L-lactate dehydrogenase 2 from Lactococcus lactis subsp. lactis (strain IL1403) (Streptococcus lactis).